The chain runs to 496 residues: Aspartyl/glutamyl-tRNA(Asn/Gln) amidotransferase subunit B (496 aa).

The protein belongs to the GatB/GatE family. GatB subfamily. As to quaternary structure, heterotrimer of A, B and C subunits.

It catalyses the reaction L-glutamyl-tRNA(Gln) + L-glutamine + ATP + H2O = L-glutaminyl-tRNA(Gln) + L-glutamate + ADP + phosphate + H(+). It carries out the reaction L-aspartyl-tRNA(Asn) + L-glutamine + ATP + H2O = L-asparaginyl-tRNA(Asn) + L-glutamate + ADP + phosphate + 2 H(+). Functionally, allows the formation of correctly charged Asn-tRNA(Asn) or Gln-tRNA(Gln) through the transamidation of misacylated Asp-tRNA(Asn) or Glu-tRNA(Gln) in organisms which lack either or both of asparaginyl-tRNA or glutaminyl-tRNA synthetases. The reaction takes place in the presence of glutamine and ATP through an activated phospho-Asp-tRNA(Asn) or phospho-Glu-tRNA(Gln). The protein is Aspartyl/glutamyl-tRNA(Asn/Gln) amidotransferase subunit B of Natronomonas pharaonis (strain ATCC 35678 / DSM 2160 / CIP 103997 / JCM 8858 / NBRC 14720 / NCIMB 2260 / Gabara) (Halobacterium pharaonis).